We begin with the raw amino-acid sequence, 509 residues long: Dye-decolorizing peroxidase AauDyP1 (509 aa).

The N-terminal stretch at 1–22 is a signal peptide; the sequence is MRLSPVFVALLSGLLAADLGLA. The propeptide occupies 23–61; that stretch reads RSVAPRVADSPAAVTGTRKTSLLKNVAGLPPVPSAAQVA. Asp-229 serves as the catalytic Proton acceptor. Residue Asn-343 is glycosylated (N-linked (GlcNAc...) asparagine). His-365 serves as a coordination point for heme. N-linked (GlcNAc...) asparagine glycans are attached at residues Asn-383, Asn-410, and Asn-476.

It belongs to the DyP-type peroxidase family. Requires heme b as cofactor.

The protein resides in the secreted. It catalyses the reaction Reactive Blue 5 + 2 H2O2 = 2,2'-disulfonyl azobenzene + 3-[(4-amino-6-chloro-1,3,5-triazin-2-yl)amino]benzenesulfonate + phthalate + 2 H2O + 2 H(+). The enzyme catalyses 2 a phenolic donor + H2O2 = 2 a phenolic radical donor + 2 H2O. Its activity is regulated as follows. Inhibited by imidazole. Its function is as follows. Manganese-independent peroxidase that is able to convert a large number of compounds, but its physiological substrate is not known. In addition to classic peroxidase substrates (e.g. 2,6-dimethoxyphenol), oxidizes dyes such as Reactive Blue 5 and Reactive Black 5. The protein is Dye-decolorizing peroxidase AauDyP1 of Auricularia auricula-judae (Judas ear fungus).